The sequence spans 48 residues: Piguamerin (48 aa).

Intrachain disulfides connect C3/C14, C8/C19, C21/C41, C26/C45, and C30/C47. The Antistasin-like domain occupies 19–47 (CVCVIGQCRKYCPNGFKKDENGCTFPCTC).

Belongs to the protease inhibitor I15 (antistasin) family.

The protein resides in the secreted. Inhibits plasma and tissue kallikrein, and trypsin. May be involved in leech hematophagia. This is Piguamerin from Hirudo nipponia (Korean blood-sucking leech).